The following is a 136-amino-acid chain: Transcription antitermination protein NusB (136 aa).

The protein belongs to the NusB family.

Functionally, involved in transcription antitermination. Required for transcription of ribosomal RNA (rRNA) genes. Binds specifically to the boxA antiterminator sequence of the ribosomal RNA (rrn) operons. The sequence is that of Transcription antitermination protein NusB from Pseudarthrobacter chlorophenolicus (strain ATCC 700700 / DSM 12829 / CIP 107037 / JCM 12360 / KCTC 9906 / NCIMB 13794 / A6) (Arthrobacter chlorophenolicus).